Reading from the N-terminus, the 392-residue chain is Phospho-N-acetylmuramoyl-pentapeptide-transferase (392 aa).

11 consecutive transmembrane segments (helical) span residues 24–44 (YLTLRAVMAALTALLIGLIAG), 76–96 (TMGGVLILGSIAISTLLWFDL), 100–120 (FVWIVLAVTLGFGAIGWVDDW), 137–157 (YFWQSVIGLLAALYLVFSISE), 167–187 (FITWVQSGFLMDLPPKAGLLV), 193–213 (VSYPLGVLGFVILTYLVIVGS), 225–245 (GLAIMPVIMVGASLGIFAYVT), 262–282 (SGELLIFCAAMAGAGLAFLWF), 289–309 (VFMGDVGALALGAALGTIAVI), 314–334 (IVLAIMGGIFVVEALSVMLQV), and 369–389 (QVVVRFWIITMLLCLVGLTTL).

This sequence belongs to the glycosyltransferase 4 family. MraY subfamily. Mg(2+) is required as a cofactor.

The protein localises to the cell inner membrane. The catalysed reaction is UDP-N-acetyl-alpha-D-muramoyl-L-alanyl-gamma-D-glutamyl-meso-2,6-diaminopimeloyl-D-alanyl-D-alanine + di-trans,octa-cis-undecaprenyl phosphate = di-trans,octa-cis-undecaprenyl diphospho-N-acetyl-alpha-D-muramoyl-L-alanyl-D-glutamyl-meso-2,6-diaminopimeloyl-D-alanyl-D-alanine + UMP. Its pathway is cell wall biogenesis; peptidoglycan biosynthesis. Functionally, catalyzes the initial step of the lipid cycle reactions in the biosynthesis of the cell wall peptidoglycan: transfers peptidoglycan precursor phospho-MurNAc-pentapeptide from UDP-MurNAc-pentapeptide onto the lipid carrier undecaprenyl phosphate, yielding undecaprenyl-pyrophosphoryl-MurNAc-pentapeptide, known as lipid I. The chain is Phospho-N-acetylmuramoyl-pentapeptide-transferase from Acidovorax ebreus (strain TPSY) (Diaphorobacter sp. (strain TPSY)).